Here is a 1390-residue protein sequence, read N- to C-terminus: Hepatocyte growth factor receptor (1390 aa).

A signal peptide spans 1–24; sequence MKAPAVLAPGILVLLFTLVQRSNG. At 25–932 the chain is on the extracellular side; that stretch reads ECKEALAKSE…VIVQPDQNFT (908 aa). A Sema domain is found at 27–515; it reads KEALAKSEMN…TGKKITKIPL (489 aa). Asn-45 carries an N-linked (GlcNAc...) asparagine glycan. Cystine bridges form between Cys-95–Cys-101, Cys-98–Cys-160, Cys-133–Cys-141, and Cys-172–Cys-175. Asn-106 carries N-linked (GlcNAc...) asparagine glycosylation. Asn-149 carries an N-linked (GlcNAc...) asparagine glycan. N-linked (GlcNAc...) asparagine glycosylation occurs at Asn-202. Intrachain disulfides connect Cys-298–Cys-363 and Cys-385–Cys-397. N-linked (GlcNAc...) asparagine glycans are attached at residues Asn-399 and Asn-405. Disulfide bonds link Cys-520-Cys-538, Cys-526-Cys-561, Cys-529-Cys-545, and Cys-541-Cys-551. IPT/TIG domains are found at residues 563–655, 657–739, and 742–836; these read PAIY…FSYV, PVIT…FSYR, and PIVY…LIYV. O-linked (Man) threonine glycosylation occurs at Thr-582. 2 N-linked (GlcNAc...) asparagine glycosylation sites follow: Asn-607 and Asn-635. O-linked (Man) threonine glycosylation is found at Thr-676 and Thr-761. 3 N-linked (GlcNAc...) asparagine glycosylation sites follow: Asn-785, Asn-879, and Asn-930. The helical transmembrane segment at 933–955 threads the bilayer; the sequence is GLIAGVVSISIALLLLLGFFLWL. Topologically, residues 956–1390 are cytoplasmic; that stretch reads KKRKQIKDLG…TRPASFWETS (435 aa). At Ser-966 the chain carries Phosphoserine. At Thr-977 the chain carries Phosphothreonine. 3 positions are modified to phosphoserine: Ser-990, Ser-997, and Ser-1000. Tyr-1003 is modified (phosphotyrosine). The 268-residue stretch at 1078 to 1345 folds into the Protein kinase domain; the sequence is VHFNEVIGRG…RISAIFSTFI (268 aa). Residues 1084 to 1092 and Lys-1110 contribute to the ATP site; that span reads IGRGHFGCV. Asp-1204 (proton acceptor) is an active-site residue. The tract at residues 1212 to 1390 is interaction with RANBP9; sequence LDEKFTVKVA…TRPASFWETS (179 aa). The residue at position 1230 (Tyr-1230) is a Phosphotyrosine. A phosphotyrosine; by autocatalysis mark is found at Tyr-1234 and Tyr-1235. The residue at position 1289 (Thr-1289) is a Phosphothreonine. Residues 1320–1359 are interaction with MUC20; it reads WHPKAEMRPSFSELVSRISAIFSTFIGEHYVHVNATYVNV. Phosphotyrosine; by autocatalysis occurs at positions 1349 and 1356. Tyr-1365 is subject to Phosphotyrosine.

It belongs to the protein kinase superfamily. Tyr protein kinase family. As to quaternary structure, heterodimer made of an alpha chain (50 kDa) and a beta chain (145 kDa) which are disulfide linked. Binds PLXNB1. Interacts when phosphorylated with downstream effectors including STAT3, PIK3R1, SRC, PCLG1, GRB2 and GAB1. Interacts with SPSB1, SPSB2 and SPSB4. Interacts with INPP5D/SHIP1. When phosphorylated at Tyr-1356, interacts with INPPL1/SHIP2. Interacts with RANBP9 and RANBP10, as well as SPSB1, SPSB2, SPSB3 and SPSB4. SPSB1 binding occurs in the presence and in the absence of HGF, however HGF treatment has a positive effect on this interaction. Interacts with MUC20; prevents interaction with GRB2 and suppresses hepatocyte growth factor-induced cell proliferation. Interacts with GRB10. Interacts with PTPN1 and PTPN2. Interacts with HSP90AA1 and HSP90AB1; the interaction suppresses MET kinase activity. Interacts with tensin TNS3. Interacts (when phosphorylated) with tensin TNS4 (via SH2 domain); the interaction increases MET protein stability by inhibiting MET endocytosis and subsequent lysosomal degradation. Autophosphorylated in response to ligand binding on Tyr-1234 and Tyr-1235 in the kinase domain leading to further phosphorylation of Tyr-1349 and Tyr-1356 in the C-terminal multifunctional docking site. Dephosphorylated by PTPRJ at Tyr-1349 and Tyr-1365. Dephosphorylated by PTPN1 and PTPN2. In terms of processing, ubiquitinated. Ubiquitination by CBL regulates the receptor stability and activity through proteasomal degradation. Post-translationally, O-mannosylation of IPT/TIG domains by TMEM260 is required for protein maturation. O-mannosylated residues are composed of single mannose glycans that are not elongated or modified.

It localises to the membrane. The catalysed reaction is L-tyrosyl-[protein] + ATP = O-phospho-L-tyrosyl-[protein] + ADP + H(+). In its inactive state, the C-terminal tail interacts with the catalytic domain and inhibits the kinase activity. Upon ligand binding, the C-terminal tail is displaced and becomes phosphorylated, thus increasing the kinase activity. In terms of biological role, receptor tyrosine kinase that transduces signals from the extracellular matrix into the cytoplasm by binding to hepatocyte growth factor/HGF ligand. Regulates many physiological processes including proliferation, scattering, morphogenesis and survival. Ligand binding at the cell surface induces autophosphorylation of MET on its intracellular domain that provides docking sites for downstream signaling molecules. Following activation by ligand, interacts with the PI3-kinase subunit PIK3R1, PLCG1, SRC, GRB2, STAT3 or the adapter GAB1. Recruitment of these downstream effectors by MET leads to the activation of several signaling cascades including the RAS-ERK, PI3 kinase-AKT, or PLCgamma-PKC. The RAS-ERK activation is associated with the morphogenetic effects while PI3K/AKT coordinates prosurvival effects. During embryonic development, MET signaling plays a role in gastrulation, development and migration of muscles and neuronal precursors, angiogenesis and kidney formation. In adults, participates in wound healing as well as organ regeneration and tissue remodeling. Also promotes differentiation and proliferation of hematopoietic cells. This is Hepatocyte growth factor receptor (MET) from Pongo abelii (Sumatran orangutan).